The chain runs to 732 residues: Probable boron transporter 3 (732 aa).

At M1 the chain carries N-acetylmethionine. Residues 1–37 (MDEAESFVPFQGIKKDVKGRLNCYKQDWISGLRAGFR) lie on the Cytoplasmic side of the membrane. A helical transmembrane segment spans residues 38–58 (ILAPTTYIFFASAIPVITFGE). Residues 59-77 (QLERDTDGKITAVQTLVST) lie on the Extracellular side of the membrane. A helical transmembrane segment spans residues 78–98 (ALCGVIHSIIGGQPLLILGVA). The Cytoplasmic segment spans residues 99–123 (EPTVIMYTFMFNFAKSRTDLGSNLF). Residues 124–144 (LAWTGWVCLWTGLLLFLLAVL) form a helical membrane-spanning segment. Residues 145–157 (GACTFINRFTRLA) lie on the Extracellular side of the membrane. A helical transmembrane segment spans residues 158 to 178 (GELFGILIAMLFMQEAIRGIV). Topologically, residues 179–197 (DEFGVPGRTNPRSAEFQPA) are cytoplasmic. The chain crosses the membrane as a helical span at residues 198–218 (WVFANGMFGLVLSSGLLYTGL). Topologically, residues 219 to 234 (KSRKARSWRFGAEWLR) are extracellular. A helical membrane pass occupies residues 235 to 255 (GFIADYGVPVMVVVWTCISYI). Topologically, residues 256-291 (PWKSVPQGIPRRLVSPNPWSPGAYQNWTVIKEMVDV) are cytoplasmic. Residues 292–312 (PVLYILLAVVPASMIAVLYYF) traverse the membrane as a helical segment. Over 313–339 (DHSVASQLAQQEDFNLRKPPAYHYDLF) the chain is Extracellular. The helical transmembrane segment at 340–360 (LLGFLTILCGLIGIPPSNGVI) threads the bilayer. At 361–463 (PQSPMHTKSL…ILPVEVKEQR (103 aa)) the chain is on the cytoplasmic side. Residues 464 to 484 (VSNFLQAMMVAGCVAAMPLIK) traverse the membrane as a helical segment. The Extracellular portion of the chain corresponds to 485-556 (RIPSSVLWGY…LFQTAYLLVC (72 aa)). A helical transmembrane segment spans residues 557–577 (FGITWVPVAGVLFPLMIMFLV). Over 578 to 732 (PVRQYVLPNF…QRLSNLGKSV (155 aa)) the chain is Cytoplasmic. Residues 695–732 (GGGEISPRSSAGRAPFSPRSATGGGGGEQRLSNLGKSV) are disordered.

It belongs to the anion exchanger (TC 2.A.31.3) family.

The protein resides in the membrane. Functionally, probable boron transporter. Boron is essential for maintaining the integrity of plants cell walls. The polypeptide is Probable boron transporter 3 (BOR3) (Arabidopsis thaliana (Mouse-ear cress)).